A 235-amino-acid polypeptide reads, in one-letter code: tRNA pseudouridine synthase B (235 aa).

Residue aspartate 45 is the Nucleophile of the active site.

Belongs to the pseudouridine synthase TruB family. Type 1 subfamily.

It catalyses the reaction uridine(55) in tRNA = pseudouridine(55) in tRNA. Its function is as follows. Responsible for synthesis of pseudouridine from uracil-55 in the psi GC loop of transfer RNAs. The sequence is that of tRNA pseudouridine synthase B from Chlamydia abortus (strain DSM 27085 / S26/3) (Chlamydophila abortus).